A 355-amino-acid polypeptide reads, in one-letter code: Alanine racemase (355 aa).

The active-site Proton acceptor; specific for D-alanine is the K34. K34 is subject to N6-(pyridoxal phosphate)lysine. R133 lines the substrate pocket. The active-site Proton acceptor; specific for L-alanine is Y249. M297 provides a ligand contact to substrate.

It belongs to the alanine racemase family. It depends on pyridoxal 5'-phosphate as a cofactor.

It carries out the reaction L-alanine = D-alanine. It functions in the pathway amino-acid biosynthesis; D-alanine biosynthesis; D-alanine from L-alanine: step 1/1. Catalyzes the interconversion of L-alanine and D-alanine. May also act on other amino acids. The protein is Alanine racemase (alr) of Rickettsia canadensis (strain McKiel).